The primary structure comprises 219 residues: Mucosal pentraxin (219 aa).

The first 19 residues, 1–19, serve as a signal peptide directing secretion; that stretch reads MEKLIVGTLLLTVLSGGIS. Positions 24-219 constitute a Pentraxin (PTX) domain; the sequence is DGKAFIFPQE…YVVTKPKLWT (196 aa). C55 and C114 are disulfide-bonded. Residues D77, N78, E155, Q156, D157, and Q167 each contribute to the Ca(2+) site.

The protein belongs to the pentraxin family. Homopentamer. Pentraxin (or pentaxin) have a discoid arrangement of 5 non-covalently bound subunits. Ca(2+) serves as cofactor. Expression is restricted to small intestine, stomach and colon. Within colon, expressed in epithelial cells located within the lower to mid region of transverse and distal crypts, but not in proximal colon.

It localises to the secreted. This chain is Mucosal pentraxin (Mptx1), found in Rattus norvegicus (Rat).